Here is a 465-residue protein sequence, read N- to C-terminus: Neutrophil collagenase (465 aa).

Positions 1–20 (MFRLKTLPLLIFLHTQLANA) are cleaved as a signal peptide. The propeptide at 21-100 (FPVPEHLEEK…CGVPDSGDFL (80 aa)) is activation peptide. Asparagine 55 carries an N-linked (GlcNAc...) asparagine glycan. A Cysteine switch motif is present at residues 89–96 (PRCGVPDS). Residue cysteine 91 participates in Zn(2+) binding. Asparagine 112 carries an N-linked (GlcNAc...) asparagine glycan. Aspartate 157 is a binding site for Ca(2+). Zn(2+)-binding residues include histidine 167 and aspartate 169. Residues aspartate 174, glycine 175, asparagine 177, and isoleucine 179 each coordinate Ca(2+). Zn(2+) is bound at residue histidine 182. Ca(2+)-binding residues include glycine 189, glycine 191, and aspartate 193. A Zn(2+)-binding site is contributed by histidine 195. Residues aspartate 197 and glutamate 200 each contribute to the Ca(2+) site. Residue histidine 217 participates in Zn(2+) binding. Glutamate 218 is an active-site residue. 2 residues coordinate Zn(2+): histidine 221 and histidine 227. Hemopexin repeat units follow at residues 276-325 (PKAC…WPFL), 326-372 (PNGL…GFPR), 374-420 (VQAI…FPGV), and 421-464 (NCRV…WLNC). A disulfide bond links cysteine 279 and cysteine 464. Aspartate 286 contacts Ca(2+). Residues aspartate 378 and aspartate 425 each coordinate Ca(2+).

Belongs to the peptidase M10A family. The cofactor is Ca(2+). It depends on Zn(2+) as a cofactor. In terms of tissue distribution, neutrophils. Expressed in uterus. Low levels in kidney and muscle.

It is found in the cytoplasmic granule. Its subcellular location is the secreted. It localises to the extracellular space. The protein localises to the extracellular matrix. The enzyme catalyses Cleavage of interstitial collagens in the triple helical domain. Unlike EC 3.4.24.7, this enzyme cleaves type III collagen more slowly than type I.. Cannot be activated without removal of the activation peptide. Activated by matrilysin. Its function is as follows. Can degrade fibrillar type I, II, and III collagens. May play a role in the degradation of collagen fibers during uterine involution. This Mus musculus (Mouse) protein is Neutrophil collagenase (Mmp8).